The following is a 117-amino-acid chain: Large ribosomal subunit protein bL19 (117 aa).

It belongs to the bacterial ribosomal protein bL19 family.

In terms of biological role, this protein is located at the 30S-50S ribosomal subunit interface and may play a role in the structure and function of the aminoacyl-tRNA binding site. The protein is Large ribosomal subunit protein bL19 of Exiguobacterium sp. (strain ATCC BAA-1283 / AT1b).